The following is a 244-amino-acid chain: 5-oxoprolinase subunit A (244 aa).

Belongs to the LamB/PxpA family. As to quaternary structure, forms a complex composed of PxpA, PxpB and PxpC.

It catalyses the reaction 5-oxo-L-proline + ATP + 2 H2O = L-glutamate + ADP + phosphate + H(+). Functionally, catalyzes the cleavage of 5-oxoproline to form L-glutamate coupled to the hydrolysis of ATP to ADP and inorganic phosphate. The polypeptide is 5-oxoprolinase subunit A (Escherichia coli (strain SE11)).